A 101-amino-acid chain; its full sequence is Small ribosomal subunit protein uS10 (101 aa).

Belongs to the universal ribosomal protein uS10 family. As to quaternary structure, part of the 30S ribosomal subunit.

Its function is as follows. Involved in the binding of tRNA to the ribosomes. This chain is Small ribosomal subunit protein uS10, found in Flavobacterium psychrophilum (strain ATCC 49511 / DSM 21280 / CIP 103535 / JIP02/86).